Here is a 756-residue protein sequence, read N- to C-terminus: Serine/threonine-protein kinase DCLK2 (756 aa).

Positions 1-44 (MASTRSIELEHFEERDKRPRPGSRRGAPSSSGGSSISGPKGNGL) are disordered. A compositionally biased stretch (basic and acidic residues) spans 7-19 (IELEHFEERDKRP). The segment covering 24-43 (RRGAPSSSGGSSISGPKGNG) has biased composition (low complexity). At T61 the chain carries Phosphothreonine. Doublecortin domains are found at residues 72–158 (KKAR…VDYT) and 196–279 (KLVT…AQDD). Low complexity-rich tracts occupy residues 301–311 (KYSGSRSPGFS) and 323–346 (TPSS…SPGS). Residues 301–375 (KYSGSRSPGF…GPELDRCLSP (75 aa)) form a disordered region. Residues 353 to 364 (ISAQGRSSSNVN) show a composition bias toward polar residues. S361 carries the phosphoserine modification. The 258-residue stretch at 393–650 (YRIGKVIGDG…AGEILSHPWV (258 aa)) folds into the Protein kinase domain. Residues 399–407 (IGDGNFAVV) and K422 contribute to the ATP site. D514 functions as the Proton acceptor in the catalytic mechanism. Residue S646 is modified to Phosphoserine. T665 is subject to Phosphothreonine. The tract at residues 707–756 (QDSSRPSREQTSPVPPSAQEAPPPLESPRPPGPPATSGCDLAGTWRRHRD) is disordered. The segment covering 719 to 740 (PVPPSAQEAPPPLESPRPPGPP) has biased composition (pro residues).

The protein belongs to the protein kinase superfamily. CAMK Ser/Thr protein kinase family. CaMK subfamily. Binds to and stabilizes microtubules. Interacts with MAPK8IP1/JIP-1, MAPK8IP2/JIP-2, MAPK9/JNK2, PPP1R9B/NEURABIN-2 and actin. In terms of processing, autophosphorylated. As to expression, expressed in the central and peripheral nervous system including the brain, spinal cord, cranial and dorsal root ganglia and in the parasympathetic ganglia. Present in neurons, but not in glial cells, in most forebrain areas. Strong expression in the hippocampal CA1 pyramidal cell layer. Expressed in the photoreceptor sensory cilium complex and in eyes. Also detected in individual cells of the olfactory epithelium.

It localises to the cytoplasm. The protein resides in the cytoskeleton. It catalyses the reaction L-seryl-[protein] + ATP = O-phospho-L-seryl-[protein] + ADP + H(+). The catalysed reaction is L-threonyl-[protein] + ATP = O-phospho-L-threonyl-[protein] + ADP + H(+). Protein kinase with a significantly reduced Ca(2+)+/CAM affinity and dependence compared to other members of the CaMK family. May play a role in the down-regulation of CRE-dependent gene activation probably by phosphorylation of the CREB coactivator CRTC2/TORC2 and the resulting retention of TORC2 in the cytoplasm. This is Serine/threonine-protein kinase DCLK2 (Dclk2) from Mus musculus (Mouse).